The following is a 163-amino-acid chain: Crossover junction endodeoxyribonuclease RuvC (163 aa).

Catalysis depends on residues Asp9, Glu76, and Asp148. Mg(2+)-binding residues include Asp9, Glu76, and Asp148.

Belongs to the RuvC family. Homodimer which binds Holliday junction (HJ) DNA. The HJ becomes 2-fold symmetrical on binding to RuvC with unstacked arms; it has a different conformation from HJ DNA in complex with RuvA. In the full resolvosome a probable DNA-RuvA(4)-RuvB(12)-RuvC(2) complex forms which resolves the HJ. It depends on Mg(2+) as a cofactor.

The protein localises to the cytoplasm. It catalyses the reaction Endonucleolytic cleavage at a junction such as a reciprocal single-stranded crossover between two homologous DNA duplexes (Holliday junction).. Functionally, the RuvA-RuvB-RuvC complex processes Holliday junction (HJ) DNA during genetic recombination and DNA repair. Endonuclease that resolves HJ intermediates. Cleaves cruciform DNA by making single-stranded nicks across the HJ at symmetrical positions within the homologous arms, yielding a 5'-phosphate and a 3'-hydroxyl group; requires a central core of homology in the junction. The consensus cleavage sequence is 5'-(A/T)TT(C/G)-3'. Cleavage occurs on the 3'-side of the TT dinucleotide at the point of strand exchange. HJ branch migration catalyzed by RuvA-RuvB allows RuvC to scan DNA until it finds its consensus sequence, where it cleaves and resolves the cruciform DNA. The polypeptide is Crossover junction endodeoxyribonuclease RuvC (Trichormus variabilis (strain ATCC 29413 / PCC 7937) (Anabaena variabilis)).